A 526-amino-acid polypeptide reads, in one-letter code: Peptide chain release factor 3 (526 aa).

The tr-type G domain maps to 9–277 (DKRRTFAIIS…GIVEWAPKPL (269 aa)). GTP-binding positions include 18–25 (SHPDAGKT), 86–90 (DTPGH), and 140–143 (NKLD).

It belongs to the TRAFAC class translation factor GTPase superfamily. Classic translation factor GTPase family. PrfC subfamily.

It is found in the cytoplasm. Functionally, increases the formation of ribosomal termination complexes and stimulates activities of RF-1 and RF-2. It binds guanine nucleotides and has strong preference for UGA stop codons. It may interact directly with the ribosome. The stimulation of RF-1 and RF-2 is significantly reduced by GTP and GDP, but not by GMP. This chain is Peptide chain release factor 3, found in Shewanella baltica (strain OS223).